Here is a 338-residue protein sequence, read N- to C-terminus: Ornithine carbamoyltransferase (338 aa).

Residues 56 to 59, R107, and 134 to 137 contribute to the carbamoyl phosphate site; these read STRT and HPTQ. Residues N168, D232, and 236-237 contribute to the L-ornithine site; that span reads SM. Carbamoyl phosphate contacts are provided by residues 274 to 275 and R320; that span reads CL.

It belongs to the aspartate/ornithine carbamoyltransferase superfamily. OTCase family.

It localises to the cytoplasm. It carries out the reaction carbamoyl phosphate + L-ornithine = L-citrulline + phosphate + H(+). The protein operates within amino-acid degradation; L-arginine degradation via ADI pathway; carbamoyl phosphate from L-arginine: step 2/2. Functionally, reversibly catalyzes the transfer of the carbamoyl group from carbamoyl phosphate (CP) to the N(epsilon) atom of ornithine (ORN) to produce L-citrulline. The polypeptide is Ornithine carbamoyltransferase (Buchnera aphidicola subsp. Acyrthosiphon pisum (strain 5A)).